The following is a 586-amino-acid chain: Penicillin-binding protein activator LpoA (586 aa).

The signal sequence occupies residues 1-26 (MLSILMQGLRLKKCFLPILVMFFLAG). Cys27 carries N-palmitoyl cysteine lipidation. The S-diacylglycerol cysteine moiety is linked to residue Cys27.

It belongs to the LpoA family. In terms of assembly, interacts with PBP1a.

It localises to the cell outer membrane. Its function is as follows. Regulator of peptidoglycan synthesis that is essential for the function of penicillin-binding protein 1A (PBP1a). This chain is Penicillin-binding protein activator LpoA, found in Histophilus somni (strain 2336) (Haemophilus somnus).